Here is a 427-residue protein sequence, read N- to C-terminus: Histidinol dehydrogenase (427 aa).

NAD(+)-binding residues include Tyr-127, Gln-187, and Asn-210. Substrate contacts are provided by Ser-233, Gln-255, and His-258. Zn(2+)-binding residues include Gln-255 and His-258. Residues Glu-323 and His-324 each act as proton acceptor in the active site. Residues His-324, Asp-357, Glu-411, and His-416 each coordinate substrate. Residue Asp-357 participates in Zn(2+) binding. His-416 lines the Zn(2+) pocket.

It belongs to the histidinol dehydrogenase family. Requires Zn(2+) as cofactor.

The catalysed reaction is L-histidinol + 2 NAD(+) + H2O = L-histidine + 2 NADH + 3 H(+). It participates in amino-acid biosynthesis; L-histidine biosynthesis; L-histidine from 5-phospho-alpha-D-ribose 1-diphosphate: step 9/9. In terms of biological role, catalyzes the sequential NAD-dependent oxidations of L-histidinol to L-histidinaldehyde and then to L-histidine. This is Histidinol dehydrogenase from Streptococcus mutans serotype c (strain ATCC 700610 / UA159).